Reading from the N-terminus, the 541-residue chain is Presenilin homolog (541 aa).

2 stretches are compositionally biased toward polar residues: residues 1–14 (MAAV…SSGL) and 43–52 (NNYGSSNQDQ). Disordered stretches follow at residues 1–52 (MAAV…NQDQ) and 69–92 (CGSR…NEME). Over 1–106 (MAAVNLQASC…LKYGAQHVIK (106 aa)) the chain is Cytoplasmic. The chain crosses the membrane as a helical span at residues 107 to 127 (LFVPVSLCMLVVVATINSISF). The Lumenal segment spans residues 128–154 (YNSTDVYLLYTPFHEQSPEPSVKFWSA). Residue asparagine 129 is glycosylated (N-linked (GlcNAc...) asparagine). A helical membrane pass occupies residues 155-175 (LANSLILMSVVVVMTFLLIVL). Topologically, residues 176–182 (YKKRCYR) are cytoplasmic. A helical transmembrane segment spans residues 183–203 (IIHGWLILSSFMLLFIFTYLY). The Lumenal segment spans residues 204–216 (LEELLRAYNIPMD). The chain crosses the membrane as a helical span at residues 217-237 (YPTALLIMWNFGVVGMMSIHW). The Cytoplasmic segment spans residues 238–242 (QGPLR). Residues 243 to 263 (LQQGYLIFVAALMALVFIKYL) traverse the membrane as a helical segment. Residues 264 to 265 (PE) are Lumenal-facing. A helical transmembrane segment spans residues 266–286 (WTAWAVLAAISIWDLIAVLSP). Aspartate 279 is an active-site residue. The Cytoplasmic segment spans residues 287–453 (RGPLRILVET…QNHPDGQEER (167 aa)). Residues 320–481 (NTVTPQQSQA…ASSYGDWTTT (162 aa)) are interaction with Mettl2. Positions 327–350 (SQATASSSPSSSNSTTTTRATQNS) are enriched in low complexity. Disordered regions lie at residues 327-379 (SQAT…DGSV) and 421-449 (EVQS…HPDG). Composition is skewed to polar residues over residues 361-370 (GQRTGNSHPR) and 421-443 (EVQS…TAPD). A helical membrane pass occupies residues 454-474 (GIKLGLGDFIFYSVLVGKASS). Aspartate 461 is a catalytic residue. Topologically, residues 475–481 (YGDWTTT) are lumenal. Residues 482–502 (IACFVAILIGLCLTLLLLAIW) form a helical membrane-spanning segment. The Cytoplasmic segment spans residues 503 to 506 (RKAL). The PAL motif lies at 507–509 (PAL). Positions 507 to 527 (PALPISITFGLIFCFATSAVV) form an intramembrane region, helical. Residues 528–541 (KPFMEDLSAKQVFI) lie on the Cytoplasmic side of the membrane.

This sequence belongs to the peptidase A22A family. In terms of assembly, homodimer. Component of the gamma-secretase complex, a complex composed of a presenilin (Psn) homodimer, nicastrin (Nct), Aph-1 and Pen-2. Interacts with Mettl2. Isoform 2 shows a better interaction with Mettl2 than isoform 1. Post-translationally, cleaved. The cleavage, which probably takes place between the 6th and the 7th transmembrane regions, may be required for activation of the gamma-secretase activity. As to expression, maternally expressed in nurse and follicle cells. In early embryos, expressed in all or most cells and later increases in CNS and epidermal tissues. In larvae, expression is seen in all imaginal disks, brain and optic lobes. In pupae, expression is seen in eye disk and brain.

Its subcellular location is the endoplasmic reticulum membrane. The protein localises to the golgi apparatus membrane. In terms of biological role, probable catalytic subunit of the gamma-secretase complex, an endoprotease complex that catalyzes the intramembrane cleavage of integral membrane proteins such as Notch receptor. Required for S3 cleavage of Notch, which releases activated Notch protein from the cell membrane. Involved in the patterning of the optic lobes. The chain is Presenilin homolog (Psn) from Drosophila melanogaster (Fruit fly).